Reading from the N-terminus, the 715-residue chain is Transcription activator of gluconeogenesis MGYG_02011 (715 aa).

Polar residues predominate over residues 1 to 14 (MSPHQTTGQESDNM). The segment at 1 to 28 (MSPHQTTGQESDNMAVNGENAPASSQYI) is disordered. Residues 66–94 (CYACQRGHLTCGDERPCQRCIKRGFQDAC) constitute a DNA-binding region (zn(2)-C6 fungal-type). Composition is skewed to polar residues over residues 129 to 166 (QNNVNGSNTSPGVPQQMTSPNFYSTQQSPDYNSFPQNK), 179 to 191 (YASQSPVSPTYQI), 203 to 223 (SLPQSASETPSTANAAPGQFN), and 362 to 385 (MMTTNSATFEDTTNSGAFSSRPNA). Disordered stretches follow at residues 129–223 (QNNV…GQFN), 354–414 (SPAS…RRRH), 534–569 (NHNVNTGGSSGLVTDSTSRGSYTPRPYSSDVYNSST), and 628–663 (GSNGEADAGQNGEASSSEANELNGSNANGATTNGRG). Positions 386–400 (SVSQQRQQPVVSTPQ) are enriched in low complexity. Composition is skewed to polar residues over residues 535–554 (HNVNTGGSSGLVTDSTSRGS) and 639–649 (GEASSSEANEL). The segment covering 650–662 (NGSNANGATTNGR) has biased composition (low complexity).

Belongs to the ERT1/acuK family.

Its subcellular location is the nucleus. In terms of biological role, transcription factor which regulates nonfermentable carbon utilization. Activator of gluconeogenetic genes. This Arthroderma gypseum (strain ATCC MYA-4604 / CBS 118893) (Microsporum gypseum) protein is Transcription activator of gluconeogenesis MGYG_02011.